The chain runs to 113 residues: Photosystem II reaction center Psb28 protein (113 aa).

Belongs to the Psb28 family. As to quaternary structure, part of the photosystem II complex.

Its subcellular location is the cellular thylakoid membrane. This Trichodesmium erythraeum (strain IMS101) protein is Photosystem II reaction center Psb28 protein.